Here is a 112-residue protein sequence, read N- to C-terminus: Protein FAM32A (112 aa).

The disordered stretch occupies residues 23 to 56 (TKRKKKKKDKDKAKMLEAMGTSKKNEEEKRRCLD). Basic and acidic residues predominate over residues 45-56 (KKNEEEKRRCLD).

This sequence belongs to the FAM32 family.

It is found in the nucleus. Functionally, may induce G2 arrest and apoptosis. May also increase cell sensitivity to apoptotic stimuli. In Rattus norvegicus (Rat), this protein is Protein FAM32A (Fam32a).